The sequence spans 398 residues: uncharacterized protein (398 aa).

6 consecutive transmembrane segments (helical) span residues 37-57 (LVIL…FVQF), 92-112 (IFNA…FIFG), 122-142 (LLTL…SYIP), 186-206 (LFYG…ILII), 228-248 (IGGI…VIGT), and 268-288 (FGVA…NIVL).

The protein resides in the cell membrane. This is an uncharacterized protein from Mycoplasma genitalium (strain ATCC 33530 / DSM 19775 / NCTC 10195 / G37) (Mycoplasmoides genitalium).